Reading from the N-terminus, the 291-residue chain is MIPIQLTVFFMIIYVLESLTIIVQSSLIVAVLGREWLQVRRLMPVDMILISLGISRFCLQWASMLNNFCSYFNLNYVLCNLTITWEFFNILTFWLNSLLTVFYCIKVSSFTHHIFLWLRWRILRLFPWILLGSLMITCVTIIPSAIGNYIQIQLLTMEHLPRNSTVTDKLEKFHQYQFQAHTVALVIPFILFLASTILLMASLTKQIQHHSTGHCNPSMKAHFTALRSLAVLFIVFTSYFLTILITIIGTLFDKRCWLWVWEAFVYAFILMHSTSLMLSSPTLKRILKGKC.

A topological domain (extracellular) is located at residue Met-1. Residues 2 to 22 (IPIQLTVFFMIIYVLESLTII) form a helical membrane-spanning segment. The Cytoplasmic portion of the chain corresponds to 23 to 41 (VQSSLIVAVLGREWLQVRR). The chain crosses the membrane as a helical span at residues 42–62 (LMPVDMILISLGISRFCLQWA). At 63–84 (SMLNNFCSYFNLNYVLCNLTIT) the chain is on the extracellular side. N-linked (GlcNAc...) asparagine glycosylation occurs at Asn-80. The helical transmembrane segment at 85–105 (WEFFNILTFWLNSLLTVFYCI) threads the bilayer. Residues 106–125 (KVSSFTHHIFLWLRWRILRL) lie on the Cytoplasmic side of the membrane. A helical transmembrane segment spans residues 126-146 (FPWILLGSLMITCVTIIPSAI). Over 147-182 (GNYIQIQLLTMEHLPRNSTVTDKLEKFHQYQFQAHT) the chain is Extracellular. Residue Asn-163 is glycosylated (N-linked (GlcNAc...) asparagine). Residues 183–203 (VALVIPFILFLASTILLMASL) form a helical membrane-spanning segment. Topologically, residues 204–228 (TKQIQHHSTGHCNPSMKAHFTALRS) are cytoplasmic. Residues 229-249 (LAVLFIVFTSYFLTILITIIG) traverse the membrane as a helical segment. At 250 to 257 (TLFDKRCW) the chain is on the extracellular side. Residues 258–278 (LWVWEAFVYAFILMHSTSLML) traverse the membrane as a helical segment. Over 279-291 (SSPTLKRILKGKC) the chain is Cytoplasmic.

This sequence belongs to the G-protein coupled receptor T2R family. As to quaternary structure, interacts with RTP3 and RTP4.

It localises to the cell membrane. In terms of biological role, receptor that may play a role in the perception of bitterness and is gustducin-linked. May play a role in sensing the chemical composition of the gastrointestinal content. The activity of this receptor may stimulate alpha gustducin, mediate PLC-beta-2 activation and lead to the gating of TRPM5. The sequence is that of Taste receptor type 2 member 16 (TAS2R16) from Pan troglodytes (Chimpanzee).